The primary structure comprises 836 residues: Granulocyte colony-stimulating factor receptor (836 aa).

The signal sequence occupies residues 1–24 (MARLGNCSLTWAALIILLLPGSLE). The Ig-like C2-type domain occupies 25 to 117 (ECGHISVSAP…SLQILDQVEL (93 aa)). Topologically, residues 25–627 (ECGHISVSAP…TLTPEGSELH (603 aa)) are extracellular. Intrachain disulfides connect C26-C52 and C46-C101. N-linked (GlcNAc...) asparagine glycosylation is found at N51, N93, N128, and N134. Fibronectin type-III domains lie at 125 to 230 (IPHN…LEPP), 233 to 332 (RTMD…TTER), 334 to 430 (PTVR…SRGP), 431 to 528 (ALTR…MAPS), and 530 to 623 (APEL…TPEG). Intrachain disulfides connect C131/C142, C167/C218, C177/C186, C248/C295, and C266/C309. A WSXWS motif motif is present at residues 318 to 322 (WSDWS). 4 N-linked (GlcNAc...) asparagine glycosylation sites follow: N389, N474, N579, and N610. The helical transmembrane segment at 628 to 650 (IILGLFGLLLLLTCLCGTAWLCC) threads the bilayer. Residues 651 to 836 (SPNRKNPLWP…VHGMEALGSF (186 aa)) are Cytoplasmic-facing. A Box 1 motif motif is present at residues 658-666 (LWPSVPDPA).

This sequence belongs to the type I cytokine receptor family. Type 2 subfamily. In terms of assembly, homodimer. The dimeric receptor binds two CSF3 molecules. Interacts with CEACAM1; down-regulates the CSF3R-STAT3 pathway through recruitment of PTPN6 that dephosphorylates CSF3R. N-glycosylated. In terms of tissue distribution, one or several isoforms have been found in myelogenous leukemia cell line KG-1, leukemia U-937 cell line, in bone marrow cells, placenta, and peripheral blood granulocytes. Isoform GCSFR-2 is found only in leukemia U-937 cells. Isoform GCSFR-3 is highly expressed in placenta.

Its subcellular location is the secreted. It localises to the cell membrane. Receptor for granulocyte colony-stimulating factor (CSF3), essential for granulocytic maturation. Plays a crucial role in the proliferation, differentiation and survival of cells along the neutrophilic lineage. In addition it may function in some adhesion or recognition events at the cell surface. This is Granulocyte colony-stimulating factor receptor (CSF3R) from Homo sapiens (Human).